The chain runs to 184 residues: MSDIINETKSRMQKSIESLSRELANISAGRANSNLLNGVTVDYYGAPTPVQQLASINVPEARLLVISPYDKTSVADIEKAIIAANLGVNPTSDGEVIRIAVPALTEERRKERVKDVKKIGEEAKVSVRNIRRDMNDQLKKDEKNGDITEDELRSGTEDVQKATDNSIKEIDQMIADKEKDIMSV.

The segment at 134–167 (MNDQLKKDEKNGDITEDELRSGTEDVQKATDNSI) is disordered.

Belongs to the RRF family.

The protein localises to the cytoplasm. Its function is as follows. Responsible for the release of ribosomes from messenger RNA at the termination of protein biosynthesis. May increase the efficiency of translation by recycling ribosomes from one round of translation to another. The polypeptide is Ribosome-recycling factor (Staphylococcus aureus (strain Mu3 / ATCC 700698)).